The sequence spans 324 residues: CYFIP-related Rac1 interactor B (324 aa).

Residue Gly2 is the site of N-myristoyl glycine attachment. Residue Lys74 forms a Glycyl lysine isopeptide (Lys-Gly) (interchain with G-Cter in ubiquitin) linkage.

Belongs to the CYRI family. Interacts with RAC1 (GTP-bound form preferentially). In terms of processing, ubiquitinated at Lys-74 upon Salmonella bacterial infection. As to expression, expressed in pancreatic ducts (at protein level).

It localises to the membrane. Its subcellular location is the mitochondrion. Its function is as follows. Negatively regulates RAC1 signaling and RAC1-driven cytoskeletal remodeling. Regulates chemotaxis, cell migration and epithelial polarization by controlling the polarity, plasticity, duration and extent of protrusions. Limits Rac1 mediated activation of the Scar/WAVE complex, focuses protrusion signals and regulates pseudopod complexity by inhibiting Scar/WAVE-induced actin polymerization. Protects against Salmonella bacterial infection. Attenuates processes such as macropinocytosis, phagocytosis and cell migration and restrict sopE-mediated bacterial entry. Also restricts infection mediated by Mycobacterium tuberculosis and Listeria monocytogenes. Involved in the regulation of mitochondrial dynamics and oxidative stress. This chain is CYFIP-related Rac1 interactor B (Cyrib), found in Mus musculus (Mouse).